A 467-amino-acid chain; its full sequence is A-type ATP synthase subunit B (467 aa).

The interval 95 to 114 (GKGQPRDHMPLPPPEDFRDV) is disordered.

This sequence belongs to the ATPase alpha/beta chains family. In terms of assembly, has multiple subunits with at least A(3), B(3), C, D, E, F, H, I and proteolipid K(x).

The protein localises to the cell membrane. In terms of biological role, component of the A-type ATP synthase that produces ATP from ADP in the presence of a proton gradient across the membrane. The B chain is a regulatory subunit. The protein is A-type ATP synthase subunit B of Pyrobaculum aerophilum (strain ATCC 51768 / DSM 7523 / JCM 9630 / CIP 104966 / NBRC 100827 / IM2).